The chain runs to 261 residues: Homeobox protein ceh-33 (261 aa).

A DNA-binding region (homeobox) is located at residues 133–192 (GEETSYCFRDKSRVLLRDWYCRNSYPSPREKRELAEKTHLTVTQVSNWFKNRRQRDRAGV).

It belongs to the SIX/Sine oculis homeobox family.

The protein resides in the nucleus. This Caenorhabditis elegans protein is Homeobox protein ceh-33 (ceh-33).